Reading from the N-terminus, the 158-residue chain is Urease accessory protein UreE (158 aa).

Belongs to the UreE family.

It is found in the cytoplasm. Involved in urease metallocenter assembly. Binds nickel. Probably functions as a nickel donor during metallocenter assembly. This Corynebacterium urealyticum (strain ATCC 43042 / DSM 7109) protein is Urease accessory protein UreE.